A 644-amino-acid chain; its full sequence is Exoribonuclease 2 (644 aa).

The region spanning 189–516 (RRDLTALDFV…NHRLLKAIIK (328 aa)) is the RNB domain. The region spanning 561-643 (DTRFAAEILD…ETRSIIARPA (83 aa)) is the S1 motif domain.

This sequence belongs to the RNR ribonuclease family. RNase II subfamily.

The protein resides in the cytoplasm. It catalyses the reaction Exonucleolytic cleavage in the 3'- to 5'-direction to yield nucleoside 5'-phosphates.. Its function is as follows. Involved in mRNA degradation. Hydrolyzes single-stranded polyribonucleotides processively in the 3' to 5' direction. The protein is Exoribonuclease 2 of Klebsiella pneumoniae (strain 342).